The sequence spans 716 residues: Fatty acid oxidation complex subunit alpha (716 aa).

The enoyl-CoA hydratase/isomerase stretch occupies residues 1 to 189; that stretch reads MIYQSPTIQV…KVGAVDAVVA (189 aa). Asp-296 provides a ligand contact to substrate. Residues 311–716 are 3-hydroxyacyl-CoA dehydrogenase; sequence KEVNNAAVLG…AANNGSYYQA (406 aa). NAD(+) contacts are provided by residues Met-324, Asp-343, 400-402, Lys-407, and Ser-429; that span reads VVE. His-450 functions as the For 3-hydroxyacyl-CoA dehydrogenase activity in the catalytic mechanism. Asn-453 is a binding site for NAD(+). Residues Asn-500 and Tyr-660 each contribute to the substrate site.

It in the N-terminal section; belongs to the enoyl-CoA hydratase/isomerase family. The protein in the C-terminal section; belongs to the 3-hydroxyacyl-CoA dehydrogenase family. Heterotetramer of two alpha chains (FadB) and two beta chains (FadA).

It carries out the reaction a (3S)-3-hydroxyacyl-CoA + NAD(+) = a 3-oxoacyl-CoA + NADH + H(+). The enzyme catalyses a (3S)-3-hydroxyacyl-CoA = a (2E)-enoyl-CoA + H2O. The catalysed reaction is a 4-saturated-(3S)-3-hydroxyacyl-CoA = a (3E)-enoyl-CoA + H2O. It catalyses the reaction (3S)-3-hydroxybutanoyl-CoA = (3R)-3-hydroxybutanoyl-CoA. It carries out the reaction a (3Z)-enoyl-CoA = a 4-saturated (2E)-enoyl-CoA. The enzyme catalyses a (3E)-enoyl-CoA = a 4-saturated (2E)-enoyl-CoA. It participates in lipid metabolism; fatty acid beta-oxidation. Functionally, involved in the aerobic and anaerobic degradation of long-chain fatty acids via beta-oxidation cycle. Catalyzes the formation of 3-oxoacyl-CoA from enoyl-CoA via L-3-hydroxyacyl-CoA. It can also use D-3-hydroxyacyl-CoA and cis-3-enoyl-CoA as substrate. The polypeptide is Fatty acid oxidation complex subunit alpha (Shewanella baltica (strain OS155 / ATCC BAA-1091)).